The chain runs to 424 residues: D-inositol 3-phosphate glycosyltransferase (424 aa).

1D-myo-inositol 3-phosphate is bound by residues H9, 20–25, K78, Y110, T134, and R154; that span reads DAGGMN. Position 23 (G23) interacts with UDP-N-acetyl-alpha-D-glucosamine. Residues R231, K236, and R295 each coordinate UDP-N-acetyl-alpha-D-glucosamine. Residues Y304, Q305, and A307 each coordinate Mg(2+). UDP-N-acetyl-alpha-D-glucosamine-binding residues include E317 and E325. T331 is a Mg(2+) binding site.

This sequence belongs to the glycosyltransferase group 1 family. MshA subfamily. In terms of assembly, homodimer.

It catalyses the reaction 1D-myo-inositol 3-phosphate + UDP-N-acetyl-alpha-D-glucosamine = 1D-myo-inositol 2-acetamido-2-deoxy-alpha-D-glucopyranoside 3-phosphate + UDP + H(+). Functionally, catalyzes the transfer of a N-acetyl-glucosamine moiety to 1D-myo-inositol 3-phosphate to produce 1D-myo-inositol 2-acetamido-2-deoxy-glucopyranoside 3-phosphate in the mycothiol biosynthesis pathway. This Corynebacterium urealyticum (strain ATCC 43042 / DSM 7109) protein is D-inositol 3-phosphate glycosyltransferase.